Consider the following 87-residue polypeptide: Putative defensin-like protein 235 (87 aa).

The N-terminal stretch at 1-26 is a signal peptide; the sequence is MRSATFFLVSCVLMSFVLSHVKEVEA. Disulfide bonds link Cys-46–Cys-73, Cys-54–Cys-82, and Cys-71–Cys-84.

The protein belongs to the DEFL family.

Its subcellular location is the secreted. This is Putative defensin-like protein 235 (SCRL26) from Arabidopsis thaliana (Mouse-ear cress).